A 492-amino-acid chain; its full sequence is Signal transduction histidine-protein kinase/phosphatase MprB (492 aa).

Over 1 to 27 the chain is Cytoplasmic; it reads MAFPPNSWRPTGPLPTSSLSLRWRVMM. Residues 28–48 form a helical membrane-spanning segment; it reads LAMSMVALVVVLMAVAVYAVV. The Extracellular segment spans residues 49 to 165; it reads SRALYDDLDN…TVQVLRRLGT (117 aa). A helical transmembrane segment spans residues 166–186; it reads VLLIVGGIGVAVAAIAGGAVA. The region spanning 187–239 is the HAMP domain; it reads RAGLRPVGRLTEAAERVARTDDLRPIPVVGSDELARLTEAFNMMLRALAESRE. Over 187–492 the chain is Cytoplasmic; the sequence is RAGLRPVGRL…DRGGHTVATE (306 aa). One can recognise a Histidine kinase domain in the interval 247–467; it reads DAGHELRTPL…SVHMLLPGQR (221 aa). A Phosphohistidine; by autocatalysis modification is found at His250. The tract at residues 470 to 492 is disordered; the sequence is DPGATRSAEGFVDDRGGHTVATE.

It depends on Mg(2+) as a cofactor. Mn(2+) serves as cofactor. In terms of processing, autophosphorylated.

The protein localises to the cell membrane. The enzyme catalyses ATP + protein L-histidine = ADP + protein N-phospho-L-histidine.. Member of the two-component regulatory system MprB/MprA which contributes to maintaining a balance among several systems involved in stress resistance and is required for establishment and maintenance of persistent infection in the host. In response to environmental signals MprB acts both as a membrane-associated protein kinase that undergoes autophosphorylation and subsequently transfers the phosphate to MprA, and a protein phosphatase that dephosphorylates phospho-MprA. The sequence is that of Signal transduction histidine-protein kinase/phosphatase MprB (mprB) from Mycolicibacterium smegmatis (strain ATCC 700084 / mc(2)155) (Mycobacterium smegmatis).